The following is a 295-amino-acid chain: MGIPKIAGYPLPTPAEFPDNRTGWTIDPDQAVLLIHDMQEYFVNYYQPDSSPVVDIIQHIQRLKAAAKKAGIPVIYTAQPANQHPTDRALLTDFWGPGLNGDHVPIVEALSPEEGDIEYVKWRYSAFKKTPLLEFMRAQGKSQLIISGIYGHIGILSTTLDAFMLDIQPFVIGDAIADFTREDHLRTLEYVASRSGSVKRLDEALDEIRSQKPLTLEQIQQDVATSLGIQPDEVDLDEDLMFVGLDSMRAMVLVEKWHQQGENISFGQLMEAASLREWWLVIEQARNEEQTMAVA.

The segment at 1-21 (MGIPKIAGYPLPTPAEFPDNR) is disordered. The 80-residue stretch at 207-286 (EIRSQKPLTL…EWWLVIEQAR (80 aa)) folds into the Carrier domain. Position 247 is an O-(pantetheine 4'-phosphoryl)serine (Ser247).

This sequence belongs to the isochorismatase family. The cofactor is pantetheine 4'-phosphate.

It catalyses the reaction isochorismate + H2O = (2S,3S)-2,3-dihydroxy-2,3-dihydrobenzoate + pyruvate. Its pathway is siderophore biosynthesis; vulnibactin biosynthesis. Involved in the biosynthesis of the catechol siderophore vulnibactin. Vulnibactin is a chelating compound involved in transporting iron from the bacterial environment into the cell cytoplasm. In Vibrio vulnificus (strain CMCP6), this protein is Probable isochorismatase (venB).